We begin with the raw amino-acid sequence, 336 residues long: Ornithine carbamoyltransferase, catabolic (336 aa).

Carbamoyl phosphate contacts are provided by residues 57–60 (STRT), glutamine 84, arginine 108, and 135–138 (HPTQ). L-ornithine is bound by residues asparagine 168, aspartate 232, and 236-237 (SM). Residues 274-275 (CL) and arginine 321 contribute to the carbamoyl phosphate site.

It belongs to the aspartate/ornithine carbamoyltransferase superfamily. OTCase family.

The protein resides in the cytoplasm. It carries out the reaction carbamoyl phosphate + L-ornithine = L-citrulline + phosphate + H(+). It functions in the pathway amino-acid degradation; L-arginine degradation via ADI pathway; carbamoyl phosphate from L-arginine: step 2/2. Its function is as follows. Reversibly catalyzes the transfer of the carbamoyl group from carbamoyl phosphate (CP) to the N(epsilon) atom of ornithine (ORN) to produce L-citrulline. The sequence is that of Ornithine carbamoyltransferase, catabolic (arcB) from Ectopseudomonas mendocina (Pseudomonas mendocina).